The sequence spans 425 residues: NAC domain-containing protein 10 (425 aa).

The segment covering 1–10 has biased composition (polar residues); it reads MESPDSSSGS. Residues 1-34 are disordered; the sequence is MESPDSSSGSAPPRVLRRQQQQPGSAPELPPGFR. A compositionally biased stretch (low complexity) spans 12–23; the sequence is PPRVLRRQQQQP. One can recognise an NAC domain in the interval 29–200; it reads LPPGFRFHPT…DWVLCRIYKK (172 aa). The DNA-binding element occupies 129–206; that stretch reads VGVKKALVFY…IYKKTNKAGA (78 aa).

Highest expression in stamens. Expressed in leaves.

The protein localises to the nucleus. In terms of biological role, transcription factor of the NAC family associated with male fertility. Involved in anther development, but not in senescence. Reduced expression of NAC5 via RNAi leads to male-sterility. The sequence is that of NAC domain-containing protein 10 from Oryza sativa subsp. japonica (Rice).